Reading from the N-terminus, the 132-residue chain is Ribonuclease P protein component (132 aa).

This sequence belongs to the RnpA family. Consists of a catalytic RNA component (M1 or rnpB) and a protein subunit.

The enzyme catalyses Endonucleolytic cleavage of RNA, removing 5'-extranucleotides from tRNA precursor.. In terms of biological role, RNaseP catalyzes the removal of the 5'-leader sequence from pre-tRNA to produce the mature 5'-terminus. It can also cleave other RNA substrates such as 4.5S RNA. The protein component plays an auxiliary but essential role in vivo by binding to the 5'-leader sequence and broadening the substrate specificity of the ribozyme. This chain is Ribonuclease P protein component, found in Marinobacter nauticus (strain ATCC 700491 / DSM 11845 / VT8) (Marinobacter aquaeolei).